The primary structure comprises 387 residues: Ferrochelatase (387 aa).

Positions 196 and 277 each coordinate Fe cation.

Belongs to the ferrochelatase family.

The protein resides in the cytoplasm. It catalyses the reaction heme b + 2 H(+) = protoporphyrin IX + Fe(2+). Its pathway is porphyrin-containing compound metabolism; protoheme biosynthesis; protoheme from protoporphyrin-IX: step 1/1. Its function is as follows. Catalyzes the ferrous insertion into protoporphyrin IX. The polypeptide is Ferrochelatase (Gloeothece citriformis (strain PCC 7424) (Cyanothece sp. (strain PCC 7424))).